The following is a 986-amino-acid chain: Bifunctional glutamine synthetase adenylyltransferase/adenylyl-removing enzyme (986 aa).

The tract at residues 1 to 470 (MAAVAKRTVT…ERHYAALFET (470 aa)) is adenylyl removase. The segment at 476-986 (AGIGNLVFTG…FDLLLRAGRP (511 aa)) is adenylyl transferase.

Belongs to the GlnE family. The cofactor is Mg(2+).

It carries out the reaction [glutamine synthetase]-O(4)-(5'-adenylyl)-L-tyrosine + phosphate = [glutamine synthetase]-L-tyrosine + ADP. The catalysed reaction is [glutamine synthetase]-L-tyrosine + ATP = [glutamine synthetase]-O(4)-(5'-adenylyl)-L-tyrosine + diphosphate. In terms of biological role, involved in the regulation of glutamine synthetase GlnA, a key enzyme in the process to assimilate ammonia. When cellular nitrogen levels are high, the C-terminal adenylyl transferase (AT) inactivates GlnA by covalent transfer of an adenylyl group from ATP to specific tyrosine residue of GlnA, thus reducing its activity. Conversely, when nitrogen levels are low, the N-terminal adenylyl removase (AR) activates GlnA by removing the adenylyl group by phosphorolysis, increasing its activity. The regulatory region of GlnE binds the signal transduction protein PII (GlnB) which indicates the nitrogen status of the cell. This chain is Bifunctional glutamine synthetase adenylyltransferase/adenylyl-removing enzyme, found in Mesorhizobium japonicum (strain LMG 29417 / CECT 9101 / MAFF 303099) (Mesorhizobium loti (strain MAFF 303099)).